A 289-amino-acid polypeptide reads, in one-letter code: Bifunctional protein FolD (289 aa).

NADP(+)-binding positions include 165–167 (GAS) and S190.

This sequence belongs to the tetrahydrofolate dehydrogenase/cyclohydrolase family. In terms of assembly, homodimer.

It catalyses the reaction (6R)-5,10-methylene-5,6,7,8-tetrahydrofolate + NADP(+) = (6R)-5,10-methenyltetrahydrofolate + NADPH. It carries out the reaction (6R)-5,10-methenyltetrahydrofolate + H2O = (6R)-10-formyltetrahydrofolate + H(+). Its pathway is one-carbon metabolism; tetrahydrofolate interconversion. Functionally, catalyzes the oxidation of 5,10-methylenetetrahydrofolate to 5,10-methenyltetrahydrofolate and then the hydrolysis of 5,10-methenyltetrahydrofolate to 10-formyltetrahydrofolate. In Ralstonia nicotianae (strain ATCC BAA-1114 / GMI1000) (Ralstonia solanacearum), this protein is Bifunctional protein FolD.